Here is a 536-residue protein sequence, read N- to C-terminus: SNW domain-containing protein 1 (536 aa).

A disordered region spans residues 1 to 46 (MALTSFLPAPTQLSQDQLEAEEKARSQRSRQTSLVSSRREPPPYGY). An N-acetylalanine modification is found at Ala-2. At Ser-14 the chain carries Phosphoserine. A Glycyl lysine isopeptide (Lys-Gly) (interchain with G-Cter in SUMO2) cross-link involves residue Lys-23. The interval 59–79 (GDGGAFPEIHVAQYPLDMGRK) is interaction with PPIL1. Residues Lys-81, Lys-97, Lys-115, Lys-122, Lys-141, Lys-158, and Lys-170 each participate in a glycyl lysine isopeptide (Lys-Gly) (interchain with G-Cter in SUMO2) cross-link. The SNW stretch occupies residues 174–339 (AQYIRYTPSQ…KARERRAGIK (166 aa)). A phosphoserine mark is found at Ser-182 and Ser-190. Lys-193 is covalently cross-linked (Glycyl lysine isopeptide (Lys-Gly) (interchain with G-Cter in SUMO2)). Positions 209–234 (PPRFKINKKIPRGPPSPPAPVMHSPS) are disordered. A phosphoserine mark is found at Ser-224, Ser-232, and Ser-234. Glycyl lysine isopeptide (Lys-Gly) (interchain with G-Cter in SUMO2) cross-links involve residues Lys-240, Lys-258, Lys-286, Lys-339, Lys-344, Lys-416, and Lys-441. Residues 311-386 (KMAQKEKEKH…RSKLQRNENR (76 aa)) are disordered. Phosphoserine is present on Ser-446. A Glycyl lysine isopeptide (Lys-Gly) (interchain with G-Cter in SUMO2) cross-link involves residue Lys-452. Basic and acidic residues-rich tracts occupy residues 469–489 (TNRF…RGRE) and 503–530 (KFLE…EHEG). Positions 469 to 536 (TNRFVPDKEF…EHEGKKRRKE (68 aa)) are disordered. Phosphoserine is present on residues Ser-479 and Ser-481. Residue Lys-509 forms a Glycyl lysine isopeptide (Lys-Gly) (interchain with G-Cter in SUMO2) linkage.

Belongs to the SNW family. Identified in the spliceosome C complex. Associates with U4/U6-U5 tri-small nuclear ribonucleoproteins (U4/U6-U5 tri-snRNPs). Component of the minor spliceosome, which splices U12-type introns. Interacts with SKI, SMAD2,SMAD3, RBPJ, RB1, PABPN1, MAGEA1, SIRT1, FOXN3, U2AF2, PPIL1, DAXX and ATP1B4. Interacts with VDR and RXRA; preferentially associates with VDR:RXRA heterodimers. Interacts with NCOR2. Interacts with MAML1. Interacts with NOTCH1 NICD; the interaction involves multimerized NOTCH1 NICD. Forms a complex with NOTCH1 NICD and MAML1; the association is dissociated by RBPJ. Associates with positive transcription elongation factor b (P-TEFb). Component of the SNARP complex which consists at least of SNIP1, SNW1, THRAP3, BCLAF1 and PNN.

It is found in the nucleus. Its function is as follows. Involved in pre-mRNA splicing as component of the spliceosome. As a component of the minor spliceosome, involved in the splicing of U12-type introns in pre-mRNAs. Required in the specific splicing of CDKN1A pre-mRNA; the function probably involves the recruitment of U2AF2 to the mRNA. May recruit PPIL1 to the spliceosome. May be involved in cyclin-D1/CCND1 mRNA stability through the SNARP complex which associates with both the 3'end of the CCND1 gene and its mRNA. Involved in transcriptional regulation. Modulates TGF-beta-mediated transcription via association with SMAD proteins, MYOD1-mediated transcription via association with PABPN1, RB1-mediated transcriptional repression, and retinoid-X receptor (RXR)- and vitamin D receptor (VDR)-dependent gene transcription in a cell line-specific manner probably involving coactivators NCOA1 and GRIP1. Is involved in NOTCH1-mediated transcriptional activation. Binds to multimerized forms of Notch intracellular domain (NICD) and is proposed to recruit transcriptional coactivators such as MAML1 to form an intermediate preactivation complex which associates with DNA-bound CBF-1/RBPJ to form a transcriptional activation complex by releasing SNW1 and redundant NOTCH1 NICD. The protein is SNW domain-containing protein 1 (SNW1) of Pongo abelii (Sumatran orangutan).